The following is a 608-amino-acid chain: DNA mismatch repair protein MutL (608 aa).

This sequence belongs to the DNA mismatch repair MutL/HexB family.

In terms of biological role, this protein is involved in the repair of mismatches in DNA. It is required for dam-dependent methyl-directed DNA mismatch repair. May act as a 'molecular matchmaker', a protein that promotes the formation of a stable complex between two or more DNA-binding proteins in an ATP-dependent manner without itself being part of a final effector complex. The sequence is that of DNA mismatch repair protein MutL from Anaeromyxobacter dehalogenans (strain 2CP-C).